The sequence spans 401 residues: Probable tRNA sulfurtransferase (401 aa).

One can recognise a THUMP domain in the interval 60–165 (EPIIDKLKNV…QEGTYITCHD (106 aa)). ATP contacts are provided by residues 183–184 (ML), 208–209 (HF), arginine 265, glycine 287, and glutamine 296.

The protein belongs to the ThiI family.

It localises to the cytoplasm. It catalyses the reaction [ThiI sulfur-carrier protein]-S-sulfanyl-L-cysteine + a uridine in tRNA + 2 reduced [2Fe-2S]-[ferredoxin] + ATP + H(+) = [ThiI sulfur-carrier protein]-L-cysteine + a 4-thiouridine in tRNA + 2 oxidized [2Fe-2S]-[ferredoxin] + AMP + diphosphate. The enzyme catalyses [ThiS sulfur-carrier protein]-C-terminal Gly-Gly-AMP + S-sulfanyl-L-cysteinyl-[cysteine desulfurase] + AH2 = [ThiS sulfur-carrier protein]-C-terminal-Gly-aminoethanethioate + L-cysteinyl-[cysteine desulfurase] + A + AMP + 2 H(+). Its pathway is cofactor biosynthesis; thiamine diphosphate biosynthesis. Functionally, catalyzes the ATP-dependent transfer of a sulfur to tRNA to produce 4-thiouridine in position 8 of tRNAs, which functions as a near-UV photosensor. Also catalyzes the transfer of sulfur to the sulfur carrier protein ThiS, forming ThiS-thiocarboxylate. This is a step in the synthesis of thiazole, in the thiamine biosynthesis pathway. The sulfur is donated as persulfide by IscS. This Geobacillus sp. (strain WCH70) protein is Probable tRNA sulfurtransferase.